The following is a 204-amino-acid chain: Glycerol-3-phosphate acyltransferase (204 aa).

A run of 5 helical transmembrane segments spans residues 8-28, 53-73, 81-101, 116-136, and 155-175; these read ILIF…CYIF, VPAA…VVIA, FITA…IFFG, FGFS…VAII, and VIFT…IIIL.

It belongs to the PlsY family. In terms of assembly, probably interacts with PlsX.

It localises to the cell inner membrane. It carries out the reaction an acyl phosphate + sn-glycerol 3-phosphate = a 1-acyl-sn-glycero-3-phosphate + phosphate. It functions in the pathway lipid metabolism; phospholipid metabolism. Functionally, catalyzes the transfer of an acyl group from acyl-phosphate (acyl-PO(4)) to glycerol-3-phosphate (G3P) to form lysophosphatidic acid (LPA). This enzyme utilizes acyl-phosphate as fatty acyl donor, but not acyl-CoA or acyl-ACP. This is Glycerol-3-phosphate acyltransferase from Francisella tularensis subsp. holarctica (strain FTNF002-00 / FTA).